We begin with the raw amino-acid sequence, 100 residues long: Large ribosomal subunit protein uL23 (100 aa).

This sequence belongs to the universal ribosomal protein uL23 family. In terms of assembly, part of the 50S ribosomal subunit. Contacts protein L29, and trigger factor when it is bound to the ribosome.

Functionally, one of the early assembly proteins it binds 23S rRNA. One of the proteins that surrounds the polypeptide exit tunnel on the outside of the ribosome. Forms the main docking site for trigger factor binding to the ribosome. This is Large ribosomal subunit protein uL23 from Thermotoga maritima (strain ATCC 43589 / DSM 3109 / JCM 10099 / NBRC 100826 / MSB8).